We begin with the raw amino-acid sequence, 75 residues long: uncharacterized protein (75 aa).

4Fe-4S ferredoxin-type domains lie at 2–30 (SHTI…KGEG) and 37–68 (DWYW…KEEP). 2 residues coordinate [3Fe-4S] cluster: Cys-10 and Cys-16. Residues Cys-20, Cys-46, Cys-49, and Cys-52 each contribute to the [4Fe-4S] cluster site. Cys-56 contacts [3Fe-4S] cluster.

It depends on [4Fe-4S] cluster as a cofactor. [3Fe-4S] cluster is required as a cofactor.

Its subcellular location is the plastid. It is found in the chloroplast. This is an uncharacterized protein from Porphyra purpurea (Red seaweed).